A 589-amino-acid polypeptide reads, in one-letter code: Probable peptidoglycan D,D-transpeptidase FtsI (589 aa).

The helical transmembrane segment at 47–67 (IFLVMGFFGFCFVGVSLGAGW) threads the bilayer. Ser-296 acts as the Acyl-ester intermediate in catalysis.

This sequence belongs to the transpeptidase family. Interacts with FtsN and FtsW.

The protein localises to the cell inner membrane. The enzyme catalyses Preferential cleavage: (Ac)2-L-Lys-D-Ala-|-D-Ala. Also transpeptidation of peptidyl-alanyl moieties that are N-acyl substituents of D-alanine.. The protein operates within cell wall biogenesis; peptidoglycan biosynthesis. In terms of biological role, catalyzes cross-linking of the peptidoglycan cell wall at the division septum. This is Probable peptidoglycan D,D-transpeptidase FtsI (ftsI) from Caulobacter vibrioides (strain NA1000 / CB15N) (Caulobacter crescentus).